Here is a 236-residue protein sequence, read N- to C-terminus: Reticulon-3 (236 aa).

Low complexity predominate over residues 1–24 (MAEPSAATQSPSISSSSSGAEPSA). Residues 1–31 (MAEPSAATQSPSISSSSSGAEPSAPGGGGSP) form a disordered region. Ala-2 carries the post-translational modification N-acetylalanine. Topologically, residues 2-67 (AEPSAATQSP…KKTGFVFGTT (66 aa)) are cytoplasmic. The residue at position 30 (Ser-30) is a Phosphoserine. Positions 48 to 236 (VHDLIFWRDV…LPGIAKKKAE (189 aa)) constitute a Reticulon domain. An intramembrane region (helical) is located at residues 68 to 91 (LIMLLSLAAFSVISVVSYLILALL). Topologically, residues 92 to 151 (SVTISFRIYKSVIQAVQKSEEGHPFKAYLDVDITLSSEAFHNYMNAAMVHINRALKLIIR) are cytoplasmic. An intramembrane region (helical) is located at residues 152–172 (LFLVEDLVDSLKLAVFMWLMT). At 173-176 (YVGA) the chain is on the cytoplasmic side. Positions 177–197 (VFNGITLLILAELLIFSVPIV) form an intramembrane region, helical. Residues 191 to 236 (IFSVPIVYEKYKTQIDHYVGIARDQTKSIVEKIQAKLPGIAKKKAE) are interaction with FADD. The Cytoplasmic segment spans residues 198 to 236 (YEKYKTQIDHYVGIARDQTKSIVEKIQAKLPGIAKKKAE). Positions 204–206 (QID) are interaction with BACE1.

As to quaternary structure, homodimer. Interacts with RTN4. Interacts with BACE1, BACE2, BCL2 and FADD. Interacts with ATL1 and ATL2. Interacts with TMEM33. Interacts with ZFYVE27 and with KIF5A in a ZFYVE27-dependent manner. Interacts with RIGI. Interacts with TRIM25.

Its subcellular location is the endoplasmic reticulum membrane. It localises to the golgi apparatus membrane. In terms of biological role, may be involved in membrane trafficking in the early secretory pathway. Inhibits BACE1 activity and amyloid precursor protein processing. May induce caspase-8 cascade and apoptosis. May favor BCL2 translocation to the mitochondria upon endoplasmic reticulum stress. Induces the formation of endoplasmic reticulum tubules. Acts also as an inflammation-resolving regulator by interacting with both TRIM25 and RIGI, subsequently impairing RIGI 'Lys-63'-linked polyubiquitination leading to IRF3 and NF-kappa-B inhibition. This Pongo abelii (Sumatran orangutan) protein is Reticulon-3 (RTN3).